Here is a 421-residue protein sequence, read N- to C-terminus: Histidine--tRNA ligase (421 aa).

It belongs to the class-II aminoacyl-tRNA synthetase family. Homodimer.

Its subcellular location is the cytoplasm. It catalyses the reaction tRNA(His) + L-histidine + ATP = L-histidyl-tRNA(His) + AMP + diphosphate + H(+). The sequence is that of Histidine--tRNA ligase from Solidesulfovibrio magneticus (strain ATCC 700980 / DSM 13731 / RS-1) (Desulfovibrio magneticus).